The following is a 380-amino-acid chain: Ribosomal RNA large subunit methyltransferase F (380 aa).

Disordered stretches follow at residues 1 to 54 (MSHK…PRNA) and 260 to 279 (SQVM…ATDK). Over residues 21–32 (QRQVVSKSSLQK) the composition is skewed to low complexity. Basic residues predominate over residues 44–53 (QKSKALHPRN). The segment covering 260–270 (SQVMSPQVQPS) has biased composition (low complexity).

It belongs to the methyltransferase superfamily. METTL16/RlmF family.

The protein localises to the cytoplasm. It carries out the reaction adenosine(1618) in 23S rRNA + S-adenosyl-L-methionine = N(6)-methyladenosine(1618) in 23S rRNA + S-adenosyl-L-homocysteine + H(+). Specifically methylates the adenine in position 1618 of 23S rRNA. This is Ribosomal RNA large subunit methyltransferase F from Shewanella pealeana (strain ATCC 700345 / ANG-SQ1).